The primary structure comprises 184 residues: Photosystem I assembly protein Ycf4 (184 aa).

The next 2 membrane-spanning stretches (helical) occupy residues 19–39 and 57–77; these read ISNF…LLVG and IVFF…LFIS.

Belongs to the Ycf4 family.

The protein resides in the plastid. The protein localises to the chloroplast thylakoid membrane. Seems to be required for the assembly of the photosystem I complex. In Nicotiana tomentosiformis (Tobacco), this protein is Photosystem I assembly protein Ycf4.